Reading from the N-terminus, the 357-residue chain is 4-hydroxy-3-methylbut-2-en-1-yl diphosphate synthase (flavodoxin) (357 aa).

[4Fe-4S] cluster contacts are provided by cysteine 265, cysteine 268, cysteine 300, and glutamate 307.

It belongs to the IspG family. Homodimer. The cofactor is [4Fe-4S] cluster.

The enzyme catalyses (2E)-4-hydroxy-3-methylbut-2-enyl diphosphate + oxidized [flavodoxin] + H2O + 2 H(+) = 2-C-methyl-D-erythritol 2,4-cyclic diphosphate + reduced [flavodoxin]. It participates in isoprenoid biosynthesis; isopentenyl diphosphate biosynthesis via DXP pathway; isopentenyl diphosphate from 1-deoxy-D-xylulose 5-phosphate: step 5/6. In terms of biological role, converts 2C-methyl-D-erythritol 2,4-cyclodiphosphate (ME-2,4cPP) into 1-hydroxy-2-methyl-2-(E)-butenyl 4-diphosphate. The protein is 4-hydroxy-3-methylbut-2-en-1-yl diphosphate synthase (flavodoxin) of Aquifex aeolicus (strain VF5).